Reading from the N-terminus, the 146-residue chain is MNIMPISESQLSDWLALRCLLWPDHEDVHLQEMRQLITQAHRLQLLAYTDTQQAIAMLEASIRYEYVNGTQTSPVAFLEGIFVLPEYRRSGIATGLVQQVEIWAKQFACTEFASDAALDNQISHAMHQALGFHETERVVYFKKNIG.

Residues 1 to 146 form the N-acetyltransferase domain; that stretch reads MNIMPISESQ…RVVYFKKNIG (146 aa). Residues Trp-22, His-25, Tyr-66, and Glu-79 each contribute to the substrate site. 81 to 83 lines the acetyl-CoA pocket; the sequence is IFV. Residue Asp-115 participates in substrate binding. Residue Asn-120 coordinates acetyl-CoA. Glu-136 contributes to the substrate binding site.

As to quaternary structure, homodimer.

It carries out the reaction kanamycin B + acetyl-CoA = N(6')-acetylkanamycin B + CoA + H(+). Functionally, catalyzes the transfer of an acetyl group from acetyl-CoA to the 6'-amino group of aminoglycoside molecules conferring resistance to antibiotics containing the purpurosamine ring including amikacin, kanamycin, tobramycin and netilmicin. This is Aminoglycoside N(6')-acetyltransferase type 1 from Acinetobacter baumannii.